The sequence spans 303 residues: Succinate--CoA ligase [ADP-forming] subunit alpha (303 aa).

Residues 20–23 (TGSE), Lys-46, and 108–110 (ITE) each bind CoA. A substrate-binding site is contributed by Tyr-173. The active-site Tele-phosphohistidine intermediate is His-259.

The protein belongs to the succinate/malate CoA ligase alpha subunit family. As to quaternary structure, heterotetramer of two alpha and two beta subunits.

The catalysed reaction is succinate + ATP + CoA = succinyl-CoA + ADP + phosphate. It carries out the reaction GTP + succinate + CoA = succinyl-CoA + GDP + phosphate. It functions in the pathway carbohydrate metabolism; tricarboxylic acid cycle; succinate from succinyl-CoA (ligase route): step 1/1. In terms of biological role, succinyl-CoA synthetase functions in the citric acid cycle (TCA), coupling the hydrolysis of succinyl-CoA to the synthesis of either ATP or GTP and thus represents the only step of substrate-level phosphorylation in the TCA. The alpha subunit of the enzyme binds the substrates coenzyme A and phosphate, while succinate binding and nucleotide specificity is provided by the beta subunit. The polypeptide is Succinate--CoA ligase [ADP-forming] subunit alpha (Mycobacterium tuberculosis (strain CDC 1551 / Oshkosh)).